A 397-amino-acid chain; its full sequence is Tryptophan synthase beta chain (397 aa).

Lys-88 bears the N6-(pyridoxal phosphate)lysine mark.

The protein belongs to the TrpB family. In terms of assembly, tetramer of two alpha and two beta chains. It depends on pyridoxal 5'-phosphate as a cofactor.

The enzyme catalyses (1S,2R)-1-C-(indol-3-yl)glycerol 3-phosphate + L-serine = D-glyceraldehyde 3-phosphate + L-tryptophan + H2O. It participates in amino-acid biosynthesis; L-tryptophan biosynthesis; L-tryptophan from chorismate: step 5/5. The beta subunit is responsible for the synthesis of L-tryptophan from indole and L-serine. In Haemophilus influenzae (strain PittEE), this protein is Tryptophan synthase beta chain.